The chain runs to 498 residues: MRINPTTSXPGVSTLGKKIPGRIAQIIGPVLDVAFPPGKMPNIYNSLVVXGRDTAGQQINVTCEVQQLLGNNRVRAVAMSATDGLTRGMEVIDTGAPLSVPVGGCTLGRIFNVLGEPVDNLGPVDTRTTSPIHRSAPAFIQLDTKLSIFETGIKVVDLLAPYRRGGKIGLFGGAGVGKTVLIMELINNIAKAHGGVSVFGGVGERTREGNDLYMEMKESGVINEENIAESKVALVYGQMNEPPGARMRVGLTALTMAEYFRDVNEQDVLLFIDNIFRFVQAGSEVSALLGRMPSAVGYQPTLSTEMGSLQERITSTKEGSITSIQAVYVPADDLTDPAPATTFAHLDATTVLSRGLAAKGIYPAVDPLDSTSTMLQPRIVGEEHYETAQRVKQTLQRYKELQDIIAILGLDELSEEDRLTVARARKIERFLSQPFFVAEVFTGSPGKYVGLAETIRGFQLILSGELDSFPEQAFYLVGNIDETTAKAMNLEVESNLKK.

172–179 (GGAGVGKT) is an ATP binding site.

This sequence belongs to the ATPase alpha/beta chains family. In terms of assembly, F-type ATPases have 2 components, CF(1) - the catalytic core - and CF(0) - the membrane proton channel. CF(1) has five subunits: alpha(3), beta(3), gamma(1), delta(1), epsilon(1). CF(0) has four main subunits: a(1), b(1), b'(1) and c(9-12).

Its subcellular location is the plastid. The protein localises to the chloroplast thylakoid membrane. The enzyme catalyses ATP + H2O + 4 H(+)(in) = ADP + phosphate + 5 H(+)(out). In terms of biological role, produces ATP from ADP in the presence of a proton gradient across the membrane. The catalytic sites are hosted primarily by the beta subunits. The polypeptide is ATP synthase subunit beta, chloroplastic (Brasenia schreberi (Water shield)).